We begin with the raw amino-acid sequence, 366 residues long: Tetraacyldisaccharide 4'-kinase (366 aa).

Residue 65–72 participates in ATP binding; it reads TVGGTGKT. Residues 343–366 are disordered; that stretch reads AKSTPASGGATGLNKEHQDGQPAA. A compositionally biased stretch (basic and acidic residues) spans 356–366; the sequence is NKEHQDGQPAA.

Belongs to the LpxK family.

It carries out the reaction a lipid A disaccharide + ATP = a lipid IVA + ADP + H(+). It functions in the pathway glycolipid biosynthesis; lipid IV(A) biosynthesis; lipid IV(A) from (3R)-3-hydroxytetradecanoyl-[acyl-carrier-protein] and UDP-N-acetyl-alpha-D-glucosamine: step 6/6. In terms of biological role, transfers the gamma-phosphate of ATP to the 4'-position of a tetraacyldisaccharide 1-phosphate intermediate (termed DS-1-P) to form tetraacyldisaccharide 1,4'-bis-phosphate (lipid IVA). The sequence is that of Tetraacyldisaccharide 4'-kinase from Cupriavidus pinatubonensis (strain JMP 134 / LMG 1197) (Cupriavidus necator (strain JMP 134)).